The primary structure comprises 114 residues: Period circadian protein (114 aa).

A disordered region spans residues 23–114 (VTNTSIAGTG…VTLTESLLNK (92 aa)). 14 tandem repeats follow at residues 30 to 31 (GT), 33 to 34 (GT), 36 to 37 (GT), 38 to 39 (GT), 40 to 41 (GT), 42 to 43 (GT), 44 to 45 (GT), 46 to 47 (GT), 48 to 49 (GT), 50 to 51 (GT), 52 to 53 (GT), 54 to 55 (GT), 56 to 57 (GT), and 58 to 59 (GT). Residues 30–79 (GTGGTGGTGTGTGTGTGTGTGTGTGTGTGTDTGTGTGTGTETGTGTGTGT) are compositionally biased toward gly residues. The tract at residues 30-87 (GTGGTGGTGTGTGTGTGTGTGTGTGTGTGTDTGTGTGTGTETGTGTGTGTRNGTNSGT) is 28 X 2 AA approximate tandem repeats of G-[TN]. One copy of the 15; approximate repeat lies at 60 to 61 (DT). Repeat copies occupy residues 62–63 (GT), 64–65 (GT), 66–67 (GT), and 68–69 (GT). A 20; approximate repeat occupies 70–71 (ET). Repeat copies occupy residues 72–73 (GT), 74–75 (GT), 76–77 (GT), and 78–79 (GT). The 25; approximate repeat unit spans residues 80-81 (RN). Positions 80–91 (RNGTNSGTKTGT) are enriched in low complexity. Copy 26 of the repeat occupies 82-83 (GT). Residues 84-85 (NS) form a 27; approximate repeat. Residues 86–87 (GT) form repeat 28. Positions 105–114 (VTLTESLLNK) are enriched in polar residues.

Forms a heterodimer with timeless (TIM); the complex then translocates into the nucleus. Post-translationally, phosphorylated with a circadian rhythmicity, probably by the double-time protein (dbt). Phosphorylation could be implicated in the stability of per monomer and in the formation of heterodimer per-tim.

The protein resides in the nucleus. Its subcellular location is the cytoplasm. The protein localises to the perinuclear region. Its function is as follows. Essential for biological clock functions. Determines the period length of circadian and ultradian rhythms; an increase in PER dosage leads to shortened circadian rhythms and a decrease leads to lengthened circadian rhythms. Essential for the circadian rhythmicity of locomotor activity, eclosion behavior, and for the rhythmic component of the male courtship song that originates in the thoracic nervous system. The biological cycle depends on the rhythmic formation and nuclear localization of the TIM-PER complex. Light induces the degradation of TIM, which promotes elimination of PER. Nuclear activity of the heterodimer coordinatively regulates PER and TIM transcription through a negative feedback loop. Behaves as a negative element in circadian transcriptional loop. Does not appear to bind DNA, suggesting indirect transcriptional inhibition. The protein is Period circadian protein (per) of Drosophila orena (Fruit fly).